We begin with the raw amino-acid sequence, 462 residues long: Argininosuccinate lyase (462 aa).

It belongs to the lyase 1 family. Argininosuccinate lyase subfamily.

The protein localises to the cytoplasm. The enzyme catalyses 2-(N(omega)-L-arginino)succinate = fumarate + L-arginine. Its pathway is amino-acid biosynthesis; L-arginine biosynthesis; L-arginine from L-ornithine and carbamoyl phosphate: step 3/3. The polypeptide is Argininosuccinate lyase (Caldicellulosiruptor saccharolyticus (strain ATCC 43494 / DSM 8903 / Tp8T 6331)).